The sequence spans 179 residues: Nucleoside-triphosphatase THEP1 (179 aa).

Residues 7 to 14 (GMPGVGKT) and 98 to 105 (IIIIDEIG) each bind ATP.

It belongs to the THEP1 NTPase family.

It catalyses the reaction a ribonucleoside 5'-triphosphate + H2O = a ribonucleoside 5'-diphosphate + phosphate + H(+). Functionally, has nucleotide phosphatase activity towards ATP, GTP, CTP, TTP and UTP. May hydrolyze nucleoside diphosphates with lower efficiency. The chain is Nucleoside-triphosphatase THEP1 from Pyrococcus abyssi (strain GE5 / Orsay).